The following is a 252-amino-acid chain: Delta-like protein dsl-1 (252 aa).

An N-terminal signal peptide occupies residues Met-1–Ser-17. The region spanning Ile-120–Cys-164 is the DSL domain. 6 disulfides stabilise this stretch: Cys-122–Cys-131, Cys-135–Cys-147, Cys-155–Cys-164, Cys-173–Cys-181, Cys-175–Cys-197, and Cys-199–Cys-209. One can recognise an EGF-like domain in the interval Pro-169 to Glu-210.

In terms of assembly, may interact with lin-12/Notch receptor.

The protein localises to the secreted. In terms of biological role, probable secreted Notch ligand involved in the mediation of Notch signaling. Involved in the lin-12/Notch pathway-mediated signaling of cell fate in vulval precursor cells (VPCs), acting redundantly with lag-2, apx-1 and osm-11. May also be involved in glp-1/Notch signaling. The sequence is that of Delta-like protein dsl-1 from Caenorhabditis elegans.